A 1535-amino-acid polypeptide reads, in one-letter code: ABC multidrug transporter atrF (1535 aa).

Residues 1–115 form a disordered region; it reads MADDHRQPEA…DEQASSTDEY (115 aa). N-linked (GlcNAc...) asparagine glycosylation is present at Asn-33. Residues 34-45 show a composition bias toward low complexity; the sequence is TTSTSETDASAD. The segment covering 46–76 has biased composition (basic and acidic residues); that stretch reads ADARWGERNQGDPVSRRGAMEEFEEMRREVT. Residues 79–93 show a composition bias toward basic residues; sequence SLHRTRSAKDARRRS. Residues Asn-149, Asn-274, Asn-287, and Asn-351 are each glycosylated (N-linked (GlcNAc...) asparagine). The ABC transporter 1 domain maps to 185–427; the sequence is VPALHFGKRP…FVDLGFYCPE (243 aa). The next 7 membrane-spanning stretches (helical) occupy residues 540–560, 573–593, 618–638, 646–666, 680–700, 703–723, and 791–811; these read LYTK…LFYG, GALF…MPAV, VVVD…IVYF, ASKF…ITSL, AVRF…YVIP, GLID…LSYS, and FGVV…AAEV. The interval 834 to 868 is disordered; it reads KAQNGKGNDEEQVQNTGDNAALSRGEAKSSSSGEA. In terms of domain architecture, ABC transporter 2 spans 879–1117; that stretch reads FTWSNVEYTV…DVIKYFADRG (239 aa). N-linked (GlcNAc...) asparagine glycosylation is present at Asn-892. 915 to 922 contributes to the ATP binding site; the sequence is GASGAGKT. 6 helical membrane passes run 1212 to 1232, 1246 to 1266, 1295 to 1315, 1320 to 1340, 1342 to 1362, and 1384 to 1406; these read YGKL…FWML, IFLI…KFYI, IPMA…PVGF, SSAG…ASWG, WICA…FFFV, and WMYY…FPSV. Asn-1459 carries N-linked (GlcNAc...) asparagine glycosylation. 2 helical membrane-spanning segments follow: residues 1477–1497 and 1503–1523; these read CFGI…FFIY and GWSF…EGVK.

This sequence belongs to the ABC transporter superfamily. ABCG family. PDR (TC 3.A.1.205) subfamily.

Its subcellular location is the cell membrane. The enzyme catalyses voriconazole(in) + ATP + H2O = voriconazole(out) + ADP + phosphate + H(+). Its function is as follows. Pleiotropic ABC efflux transporter involved in the basal level of azole susceptibility. Confers resistance to voriconazole. This is ABC multidrug transporter atrF from Aspergillus flavus (strain ATCC 200026 / FGSC A1120 / IAM 13836 / NRRL 3357 / JCM 12722 / SRRC 167).